We begin with the raw amino-acid sequence, 968 residues long: RNA polymerase-associated protein RapA (968 aa).

In terms of domain architecture, Helicase ATP-binding spans 164 to 334; sequence DVGRRHAPRV…FARLRLLDPN (171 aa). 177-184 provides a ligand contact to ATP; that stretch reads DEVGLGKT. The short motif at 280–283 is the DEAH box element; that stretch reads DEAH. Positions 490 to 662 constitute a Helicase C-terminal domain; it reads RVEWLMGYLT…YLASPDQTEG (173 aa).

The protein belongs to the SNF2/RAD54 helicase family. RapA subfamily. In terms of assembly, interacts with the RNAP. Has a higher affinity for the core RNAP than for the holoenzyme. Its ATPase activity is stimulated by binding to RNAP.

Its function is as follows. Transcription regulator that activates transcription by stimulating RNA polymerase (RNAP) recycling in case of stress conditions such as supercoiled DNA or high salt concentrations. Probably acts by releasing the RNAP, when it is trapped or immobilized on tightly supercoiled DNA. Does not activate transcription on linear DNA. Probably not involved in DNA repair. The polypeptide is RNA polymerase-associated protein RapA (Shigella boydii serotype 18 (strain CDC 3083-94 / BS512)).